The following is a 444-amino-acid chain: Xylose isomerase (444 aa).

Catalysis depends on residues H101 and D104. E232, E268, H271, D296, D307, D309, and D339 together coordinate Mg(2+).

It belongs to the xylose isomerase family. Homotetramer. Requires Mg(2+) as cofactor.

The protein localises to the cytoplasm. It carries out the reaction alpha-D-xylose = alpha-D-xylulofuranose. The protein is Xylose isomerase of Thermotoga petrophila (strain ATCC BAA-488 / DSM 13995 / JCM 10881 / RKU-1).